Here is a 753-residue protein sequence, read N- to C-terminus: Putative cyclic nucleotide-gated ion channel 8 (753 aa).

The Cytoplasmic portion of the chain corresponds to Met1 to Met111. The helical transmembrane segment at Phe112–Val132 threads the bilayer. The Extracellular segment spans residues Asp133 to Leu145. The chain crosses the membrane as a helical span at residues Ala146–Leu166. Residues Gln167–Arg199 are Cytoplasmic-facing. The chain crosses the membrane as a helical span at residues Tyr200–Leu220. Topologically, residues His221 to Gln233 are extracellular. The helical transmembrane segment at Ala234–Thr254 threads the bilayer. Residues Ser255–Tyr274 are Cytoplasmic-facing. A helical transmembrane segment spans residues Tyr275 to Val295. Over Glu296–Gly402 the chain is Extracellular. Residues Glu403–Gly423 form a helical membrane-spanning segment. Topologically, residues Asn424–Asn753 are cytoplasmic. Residues Leu508–Phe638 and Glu579 contribute to the a nucleoside 3',5'-cyclic phosphate site. The tract at residues Phe624–Tyr639 is calmodulin-binding. The IQ domain maps to Arg644–Glu673. Residues Lys731 to Asn753 form a disordered region. The segment covering Pro742–Asn753 has biased composition (acidic residues).

The protein belongs to the cyclic nucleotide-gated cation channel (TC 1.A.1.5) family. In terms of assembly, homotetramer or heterotetramer.

It is found in the cell membrane. Its function is as follows. Putative cyclic nucleotide-gated ion channel. This chain is Putative cyclic nucleotide-gated ion channel 8 (CNGC8), found in Arabidopsis thaliana (Mouse-ear cress).